Here is a 399-residue protein sequence, read N- to C-terminus: DJ-1 protein homolog F (399 aa).

PfpI endopeptidase domains follow at residues Lys7–Gly199 and Thr211–Gly394.

It belongs to the peptidase C56 family. In terms of assembly, homotrimer.

Functionally, may be involved in oxidative stress response. The polypeptide is DJ-1 protein homolog F (DJ1F) (Arabidopsis thaliana (Mouse-ear cress)).